Consider the following 454-residue polypeptide: UDP-N-acetylmuramate--L-alanine ligase (454 aa).

Residue 112–118 (GTHGKTT) participates in ATP binding.

This sequence belongs to the MurCDEF family.

Its subcellular location is the cytoplasm. It catalyses the reaction UDP-N-acetyl-alpha-D-muramate + L-alanine + ATP = UDP-N-acetyl-alpha-D-muramoyl-L-alanine + ADP + phosphate + H(+). Its pathway is cell wall biogenesis; peptidoglycan biosynthesis. In terms of biological role, cell wall formation. The polypeptide is UDP-N-acetylmuramate--L-alanine ligase (Nitratidesulfovibrio vulgaris (strain ATCC 29579 / DSM 644 / CCUG 34227 / NCIMB 8303 / VKM B-1760 / Hildenborough) (Desulfovibrio vulgaris)).